Reading from the N-terminus, the 249-residue chain is Proteasome subunit alpha type-4 (249 aa).

This sequence belongs to the peptidase T1A family. As to quaternary structure, the 26S proteasome consists of a 20S proteasome core and two 19S regulatory subunits. The 20S proteasome core is composed of 28 subunits that are arranged in four stacked rings, resulting in a barrel-shaped structure. The two end rings are each formed by seven alpha subunits, and the two central rings are each formed by seven beta subunits. The catalytic chamber with the active sites is on the inside of the barrel.

It localises to the cytoplasm. Its subcellular location is the nucleus. In terms of biological role, the proteasome is a multicatalytic proteinase complex which is characterized by its ability to cleave peptides with Arg, Phe, Tyr, Leu, and Glu adjacent to the leaving group at neutral or slightly basic pH. The proteasome has an ATP-dependent proteolytic activity. This chain is Proteasome subunit alpha type-4 (PAC1), found in Petunia hybrida (Petunia).